A 492-amino-acid polypeptide reads, in one-letter code: 2,3-bisphosphoglycerate-independent phosphoglycerate mutase (492 aa).

Residues Asp11 and Ser61 each contribute to the Mn(2+) site. Catalysis depends on Ser61, which acts as the Phosphoserine intermediate. Residues His118, 147–148 (RD), Arg178, Arg184, 248–251 (RNDR), and Lys320 contribute to the substrate site. Mn(2+)-binding residues include Asp386, His390, Asp427, His428, and His445.

The protein belongs to the BPG-independent phosphoglycerate mutase family. In terms of assembly, monomer. The cofactor is Mn(2+).

The catalysed reaction is (2R)-2-phosphoglycerate = (2R)-3-phosphoglycerate. Its pathway is carbohydrate degradation; glycolysis; pyruvate from D-glyceraldehyde 3-phosphate: step 3/5. Its function is as follows. Catalyzes the interconversion of 2-phosphoglycerate and 3-phosphoglycerate. In Campylobacter jejuni subsp. jejuni serotype O:2 (strain ATCC 700819 / NCTC 11168), this protein is 2,3-bisphosphoglycerate-independent phosphoglycerate mutase.